The primary structure comprises 521 residues: FAD-dependent monooxygenase DEP2 (521 aa).

The first 22 residues, 1–22 (MHDSPPFKVIIVGAGVTGLTLA), serve as a signal peptide directing secretion. 2 residues coordinate FAD: D36 and R109. N-linked (GlcNAc...) asparagine glycosylation is found at N139 and N220. FAD-binding residues include D310 and G323. A helical transmembrane segment spans residues 477-497 (ILVLWAGLWLAICFFHLVFSG). An N-linked (GlcNAc...) asparagine glycan is attached at N515.

This sequence belongs to the paxM FAD-dependent monooxygenase family. FAD is required as a cofactor.

It localises to the membrane. The protein operates within polyketide biosynthesis. Part of the gene cluster that mediates the biosynthesis of depudecin, a highly oxidized eleven-carbon linear polyketide that acts as a histone deacetylase (HDAC) inhibitor and makes a small contribution to pathogenesis. The reducing polyketide synthase DEP5 is the central enzyme in depudecin biosynthesis by yielding the backbone polyketide chain. The monooxygenases DEP2 and DEP4, as well as the uncharacterized protein DEP1, then act as tailoring enzymes to modify the intermediate polyketide chain into depudecin. The sequence is that of FAD-dependent monooxygenase DEP2 from Fusarium langsethiae.